The primary structure comprises 229 residues: Large ribosomal subunit protein uL1 (229 aa).

This sequence belongs to the universal ribosomal protein uL1 family. Part of the 50S ribosomal subunit.

Functionally, binds directly to 23S rRNA. The L1 stalk is quite mobile in the ribosome, and is involved in E site tRNA release. Protein L1 is also a translational repressor protein, it controls the translation of the L11 operon by binding to its mRNA. This is Large ribosomal subunit protein uL1 from Listeria monocytogenes serovar 1/2a (strain ATCC BAA-679 / EGD-e).